A 309-amino-acid polypeptide reads, in one-letter code: Porphobilinogen deaminase (309 aa).

Cysteine 244 carries the S-(dipyrrolylmethanemethyl)cysteine modification.

This sequence belongs to the HMBS family. In terms of assembly, monomer. It depends on dipyrromethane as a cofactor.

The enzyme catalyses 4 porphobilinogen + H2O = hydroxymethylbilane + 4 NH4(+). Its pathway is porphyrin-containing compound metabolism; protoporphyrin-IX biosynthesis; coproporphyrinogen-III from 5-aminolevulinate: step 2/4. In terms of biological role, tetrapolymerization of the monopyrrole PBG into the hydroxymethylbilane pre-uroporphyrinogen in several discrete steps. The sequence is that of Porphobilinogen deaminase from Listeria welshimeri serovar 6b (strain ATCC 35897 / DSM 20650 / CCUG 15529 / CIP 8149 / NCTC 11857 / SLCC 5334 / V8).